We begin with the raw amino-acid sequence, 502 residues long: Maturase K (502 aa).

Belongs to the intron maturase 2 family. MatK subfamily.

Its subcellular location is the plastid. The protein localises to the chloroplast. Usually encoded in the trnK tRNA gene intron. Probably assists in splicing its own and other chloroplast group II introns. This Sisymbrium irio (London rocket) protein is Maturase K.